The chain runs to 70 residues: Small ribosomal subunit protein eS17 (70 aa).

Belongs to the eukaryotic ribosomal protein eS17 family.

The sequence is that of Small ribosomal subunit protein eS17 from Methanopyrus kandleri (strain AV19 / DSM 6324 / JCM 9639 / NBRC 100938).